The sequence spans 211 residues: Shikimate kinase (211 aa).

Positions Met1–Thr22 are disordered. A compositionally biased stretch (polar residues) spans Ser12–Thr22. An ATP-binding site is contributed by Gly36–Thr41. Thr40 contributes to the Mg(2+) binding site. Substrate contacts are provided by Asp58, Arg82, and Gly104. Arg142 is a binding site for ATP. Arg161 serves as a coordination point for substrate. ATP is bound at residue Gln178.

It belongs to the shikimate kinase family. In terms of assembly, monomer. Mg(2+) is required as a cofactor.

Its subcellular location is the cytoplasm. It catalyses the reaction shikimate + ATP = 3-phosphoshikimate + ADP + H(+). It functions in the pathway metabolic intermediate biosynthesis; chorismate biosynthesis; chorismate from D-erythrose 4-phosphate and phosphoenolpyruvate: step 5/7. In terms of biological role, catalyzes the specific phosphorylation of the 3-hydroxyl group of shikimic acid using ATP as a cosubstrate. This chain is Shikimate kinase, found in Nitrosomonas europaea (strain ATCC 19718 / CIP 103999 / KCTC 2705 / NBRC 14298).